A 159-amino-acid chain; its full sequence is Small ribosomal subunit protein uS7 (159 aa).

Belongs to the universal ribosomal protein uS7 family. Part of the 30S ribosomal subunit. Contacts proteins S9 and S11.

One of the primary rRNA binding proteins, it binds directly to 16S rRNA where it nucleates assembly of the head domain of the 30S subunit. Is located at the subunit interface close to the decoding center, probably blocks exit of the E-site tRNA. This is Small ribosomal subunit protein uS7 from Rickettsia felis (strain ATCC VR-1525 / URRWXCal2) (Rickettsia azadi).